The following is a 560-amino-acid chain: uncharacterized protein (560 aa).

A signal peptide spans 1–29 (MKSALKKSVVSTSISLILASGMAAFAAHA). 3 residues coordinate Ca(2+): D66, D67, and S132. The active-site Nucleophile is the S132. Position 132 is a 3-oxoalanine (Ser) (S132). The active site involves H185. 2 residues coordinate Ca(2+): D345 and N346.

This sequence belongs to the sulfatase family. Requires Ca(2+) as cofactor. The conversion to 3-oxoalanine (also known as C-formylglycine, FGly), of a serine or cysteine residue in prokaryotes and of a cysteine residue in eukaryotes, is critical for catalytic activity.

This is an uncharacterized protein from Escherichia coli (strain K12).